We begin with the raw amino-acid sequence, 108 residues long: Iron-sulfur cluster assembly protein CyaY (108 aa).

This sequence belongs to the frataxin family.

Functionally, involved in iron-sulfur (Fe-S) cluster assembly. May act as a regulator of Fe-S biogenesis. The sequence is that of Iron-sulfur cluster assembly protein CyaY from Burkholderia orbicola (strain MC0-3).